The sequence spans 458 residues: Retinoic acid receptor RXR-beta (458 aa).

Basic and acidic residues predominate over residues 1–17 (GEAGRDGMGDTGRDSRS). The tract at residues 1–105 (GEAGRDGMGD…GGSGPPEDVK (105 aa)) is disordered. Residues 1 to 129 (GEAGRDGMGD…PGGPGAGKRL (129 aa)) form a modulating region. The segment covering 18-31 (PDSSSPNPLSQGIP) has biased composition (low complexity). Residues 32-56 (PSSPPGPPHTPSAPPPPMPPPPLGS) are compositionally biased toward pro residues. The span at 57–68 (PFPVISSSMGSP) shows a compositional bias: low complexity. Over residues 69–78 (GLPPPAPPGF) the composition is skewed to pro residues. NR C4-type zinc fingers lie at residues 130–150 (CAIC…CEGC) and 166–190 (CRDN…YQKC). The segment at residues 130-195 (CAICGDRSSG…RYQKCLATGM (66 aa)) is a DNA-binding region (nuclear receptor). The segment at 196 to 220 (KREAVQEERQRGKDKDGDGDGAGGA) is hinge. A compositionally biased stretch (basic and acidic residues) spans 201–213 (QEERQRGKDKDGD). Disordered regions lie at residues 201-223 (QEER…APEE) and 238-261 (QKSD…NDPV). The NR LBD domain occupies 221 to 454 (PEEMPVDRIL…TFLMEMLEAP (234 aa)). Residues 245–255 (EGPGATGGGGS) are compositionally biased toward gly residues.

This sequence belongs to the nuclear hormone receptor family. NR2 subfamily. Homodimer (in vitro). Heterodimer with other retinoic acid receptor family members. Binds DNA preferentially as a RAR/RXR heterodimer. Interacts with NR1H3. Interacts with AKAP13. In terms of tissue distribution, expressed in the adrenal gland with main expression in the zona fasciculata (at protein level).

It localises to the nucleus. The protein localises to the cytoplasm. Its function is as follows. Receptor for retinoic acid. Retinoic acid receptors bind as heterodimers to their target response elements in response to their ligands, all-trans or 9-cis retinoic acid, and regulate gene expression in various biological processes. The RAR/RXR heterodimers bind to the retinoic acid response elements (RARE). The polypeptide is Retinoic acid receptor RXR-beta (Rxrb) (Rattus norvegicus (Rat)).